We begin with the raw amino-acid sequence, 528 residues long: UDP-glucuronosyltransferase 2B30 (528 aa).

Positions 1–23 (MSMKWTSALLLIQLSCYLSSGNC) are cleaved as a signal peptide. Position 135 is an N6-succinyllysine (lysine 135). N-linked (GlcNAc...) asparagine glycosylation occurs at asparagine 315. Residues 493 to 513 (VIGFLLACVATVIFIITKCLF) form a helical membrane-spanning segment.

Belongs to the UDP-glycosyltransferase family. Expressed in several tissues, including prostate, testis, mammary gland, kidney, adrenals and intestine.

The protein localises to the microsome membrane. Its subcellular location is the endoplasmic reticulum membrane. The catalysed reaction is glucuronate acceptor + UDP-alpha-D-glucuronate = acceptor beta-D-glucuronoside + UDP + H(+). Its function is as follows. UDPGTs are of major importance in the conjugation and subsequent elimination of potentially toxic xenobiotics and endogenous compounds. This isozyme has glucuronidating capacity on testosterone, dihydrotestosterone, 5-alpha-androstane-3-alpha,17-beta-diol, androsterone, oestradiol, tetrahydroaldosterone and tetrahydrocortisone. This enzyme is essential to inactivation of several steroids. The polypeptide is UDP-glucuronosyltransferase 2B30 (UGT2B30) (Macaca fascicularis (Crab-eating macaque)).